Reading from the N-terminus, the 274-residue chain is Kit ligand (274 aa).

The first 25 residues, 1–25, serve as a signal peptide directing secretion; that stretch reads MKKTQTWIITCIYLQLLLFNPLVHS. Gln26 is subject to Pyrrolidone carboxylic acid. Residues 26 to 215 lie on the Extracellular side of the membrane; it reads QGICRNRVTD…SNSIEDSSLQ (190 aa). Intrachain disulfides connect Cys29–Cys114 and Cys68–Cys164. Asn90, Asn97, Asn145, and Asn196 each carry an N-linked (GlcNAc...) asparagine glycan. A helical transmembrane segment spans residues 216–238; it reads WAAVALPAFFSLVIGFAFGALYW. The Cytoplasmic segment spans residues 239–274; sequence KKKQPNLTRTVENRQINEEDNEISMLQEKEREFQEV.

It belongs to the SCF family. As to quaternary structure, homodimer, non-covalently linked. Post-translationally, a soluble form is produced by proteolytic processing of the extracellular domain.

The protein resides in the cytoplasm. The protein localises to the cytoskeleton. It is found in the cell membrane. Its subcellular location is the cell projection. It localises to the lamellipodium. The protein resides in the filopodium. The protein localises to the secreted. Stimulates the proliferation of mast cells. Able to augment the proliferation of both myeloid and lymphoid hematopoietic progenitors in bone marrow culture. Also mediates cell-cell adhesion. Acts synergistically with other cytokines, probably interleukins. The protein is Kit ligand (KITLG) of Capra hircus (Goat).